A 47-amino-acid polypeptide reads, in one-letter code: Cytochrome b559 subunit beta (47 aa).

The helical transmembrane segment at Trp-23 to Ala-39 threads the bilayer. His-27 lines the heme pocket.

The protein belongs to the PsbE/PsbF family. As to quaternary structure, heterodimer of an alpha subunit and a beta subunit. PSII is composed of 1 copy each of membrane proteins PsbA, PsbB, PsbC, PsbD, PsbE, PsbF, PsbH, PsbI, PsbJ, PsbK, PsbL, PsbM, PsbT, PsbX, PsbY, Psb30/Ycf12, peripheral proteins PsbO, CyanoQ (PsbQ), PsbU, PsbV and a large number of cofactors. It forms dimeric complexes. The cofactor is heme b.

The protein resides in the cellular thylakoid membrane. This b-type cytochrome is tightly associated with the reaction center of photosystem II (PSII). PSII is a light-driven water:plastoquinone oxidoreductase that uses light energy to abstract electrons from H(2)O, generating O(2) and a proton gradient subsequently used for ATP formation. It consists of a core antenna complex that captures photons, and an electron transfer chain that converts photonic excitation into a charge separation. The polypeptide is Cytochrome b559 subunit beta (Prochlorococcus marinus subsp. pastoris (strain CCMP1986 / NIES-2087 / MED4)).